A 127-amino-acid polypeptide reads, in one-letter code: Glycine cleavage system H protein (127 aa).

The region spanning 22–104 (KARIGITHFA…YEKAWMIVVE (83 aa)) is the Lipoyl-binding domain. The residue at position 63 (Lys-63) is an N6-lipoyllysine.

This sequence belongs to the GcvH family. In terms of assembly, the glycine cleavage system is composed of four proteins: P, T, L and H. It depends on (R)-lipoate as a cofactor.

Its function is as follows. The glycine cleavage system catalyzes the degradation of glycine. The H protein shuttles the methylamine group of glycine from the P protein to the T protein. In terms of biological role, is also involved in protein lipoylation via its role as an octanoyl/lipoyl carrier protein intermediate. The chain is Glycine cleavage system H protein from Bacillus velezensis (strain DSM 23117 / BGSC 10A6 / LMG 26770 / FZB42) (Bacillus amyloliquefaciens subsp. plantarum).